Here is a 90-residue protein sequence, read N- to C-terminus: Protein LIM3 (90 aa).

The signal sequence occupies residues 1–26 (MAAVKFLVCSVLLVVLATQSEIGLAQ). 4 disulfide bridges follow: Cys-28-Cys-65, Cys-38-Cys-54, Cys-55-Cys-80, and Cys-67-Cys-87.

It belongs to the A9/FIL1 family.

It localises to the secreted. The chain is Protein LIM3 (LIM3) from Lilium longiflorum (Trumpet lily).